A 290-amino-acid chain; its full sequence is Bifunctional protein FolD 3 (290 aa).

NADP(+)-binding positions include 163 to 165 and isoleucine 229; that span reads GHS.

Belongs to the tetrahydrofolate dehydrogenase/cyclohydrolase family. In terms of assembly, homodimer.

The enzyme catalyses (6R)-5,10-methylene-5,6,7,8-tetrahydrofolate + NADP(+) = (6R)-5,10-methenyltetrahydrofolate + NADPH. The catalysed reaction is (6R)-5,10-methenyltetrahydrofolate + H2O = (6R)-10-formyltetrahydrofolate + H(+). It functions in the pathway one-carbon metabolism; tetrahydrofolate interconversion. Catalyzes the oxidation of 5,10-methylenetetrahydrofolate to 5,10-methenyltetrahydrofolate and then the hydrolysis of 5,10-methenyltetrahydrofolate to 10-formyltetrahydrofolate. The polypeptide is Bifunctional protein FolD 3 (Roseobacter denitrificans (strain ATCC 33942 / OCh 114) (Erythrobacter sp. (strain OCh 114))).